The sequence spans 350 residues: Biotin synthase (350 aa).

Residues 41–268 (NEVQISRLLS…KSRVRLSAGR (228 aa)) enclose the Radical SAM core domain. [4Fe-4S] cluster contacts are provided by Cys56, Cys60, and Cys63. Residues Cys100, Cys131, Cys191, and Arg263 each coordinate [2Fe-2S] cluster.

It belongs to the radical SAM superfamily. Biotin synthase family. In terms of assembly, homodimer. [4Fe-4S] cluster serves as cofactor. Requires [2Fe-2S] cluster as cofactor.

The catalysed reaction is (4R,5S)-dethiobiotin + (sulfur carrier)-SH + 2 reduced [2Fe-2S]-[ferredoxin] + 2 S-adenosyl-L-methionine = (sulfur carrier)-H + biotin + 2 5'-deoxyadenosine + 2 L-methionine + 2 oxidized [2Fe-2S]-[ferredoxin]. The protein operates within cofactor biosynthesis; biotin biosynthesis; biotin from 7,8-diaminononanoate: step 2/2. Its function is as follows. Catalyzes the conversion of dethiobiotin (DTB) to biotin by the insertion of a sulfur atom into dethiobiotin via a radical-based mechanism. The polypeptide is Biotin synthase (Shewanella frigidimarina (strain NCIMB 400)).